We begin with the raw amino-acid sequence, 207 residues long: MEQHVIMALTVLIVVPVIFTIFAKKPSLIPTPIQNVFEIYIEFIDNLIKENMGEKGRKYFPLIASIGLFVFFGNLLGIIPGLESPTANLNTTMALALLVFFIYNFEGIRENGIGYFKHFLGPVPAMAPVFVIIELLSHLSRPVTLALRLFANMTGGELISVVLIMLVPFLIPMPVMLIHLIAVFLQTYVFVVLTTVYIAGAITHAEH.

The next 6 helical transmembrane spans lie at 3–23 (QHVI…TIFA), 62–82 (LIAS…IPGL), 88–108 (NLNT…FEGI), 119–139 (FLGP…LSHL), 158–178 (LISV…VMLI), and 180–200 (LIAV…YIAG).

This sequence belongs to the ATPase A chain family. As to quaternary structure, F-type ATPases have 2 components, CF(1) - the catalytic core - and CF(0) - the membrane proton channel. CF(1) has five subunits: alpha(3), beta(3), gamma(1), delta(1), epsilon(1). CF(0) has three main subunits: a(1), b(2) and c(9-12). The alpha and beta chains form an alternating ring which encloses part of the gamma chain. CF(1) is attached to CF(0) by a central stalk formed by the gamma and epsilon chains, while a peripheral stalk is formed by the delta and b chains.

The protein localises to the cell inner membrane. In terms of biological role, key component of the proton channel; it plays a direct role in the translocation of protons across the membrane. The protein is ATP synthase subunit a of Sulfurihydrogenibium sp. (strain YO3AOP1).